The primary structure comprises 623 residues: Lethal(3)malignant brain tumor-like protein 4 (623 aa).

The interval M1–P44 is disordered. Residues L10–D35 are compositionally biased toward basic and acidic residues. MBT repeat units follow at residues W52 to P152, F160 to P260, and F269 to P364. Residues L370–E414 form a CCHHC-type zinc finger. Zn(2+)-binding residues include C379, C384, H398, and C404. Residues W543–S607 form the SAM domain.

The protein localises to the nucleus. Functionally, putative Polycomb group (PcG) protein. PcG proteins maintain the transcriptionally repressive state of genes, probably via a modification of chromatin, rendering it heritably changed in its expressibility. This is Lethal(3)malignant brain tumor-like protein 4 (L3MBTL4) from Homo sapiens (Human).